We begin with the raw amino-acid sequence, 163 residues long: Small heat shock protein C1 (163 aa).

In terms of domain architecture, sHSP spans 55-163; it reads TFYESSSLKS…EQDSREITIN (109 aa).

Belongs to the small heat shock protein (HSP20) family.

The polypeptide is Small heat shock protein C1 (hspC1) (Rickettsia prowazekii (strain Madrid E)).